The chain runs to 284 residues: Protein pxr1 (284 aa).

The G-patch domain maps to 25–71 (TNRLGFKLLSSYGWVNGNGLGEKQHGRIHNIKVSLKDDTLGIGAKAT). A disordered region spans residues 149–253 (DEDRVCEDAS…KVKEGNRPAS (105 aa)). A phosphoserine mark is found at S159 and S160. 2 stretches are compositionally biased toward basic residues: residues 166–181 (EKRK…KKKT) and 196–206 (TKKKKKEHKKK). Composition is skewed to basic and acidic residues over residues 207–224 (DKES…DKEE) and 233–249 (KDKP…KEGN).

This sequence belongs to the PINX1 family.

The protein localises to the nucleus. It localises to the nucleolus. Its function is as follows. Involved in rRNA-processing at A0, A1 and A2 sites and negatively regulates telomerase. This chain is Protein pxr1 (pxr1), found in Schizosaccharomyces pombe (strain 972 / ATCC 24843) (Fission yeast).